The chain runs to 433 residues: MNNSEIININGPLKGEIEVPGDKSMTHRAIMLASLAKGISTIYEPLMGEDCRRTMDIFKLLGVTIEEQDNSIIINSPGYQNFITPHQVLYTGNSGTTTRLLAGLLSGLGIESVLSGDVSIGKRPMDRVMKPLLKMNANISGIDNNYTPLIIKPSTIKGINYQMEVASAQVKSAILLASLFSKEATTLTEFDVSRNHTETLFAHFNIPISIQGKTIQTIPYAIEHIQPRDFHVPGDISSAAFFIVAALITPGSDITIHNVGINPTRSGIIDIVKQMGGNIELSNVSKGAEPTASIHVKYTPNLNAVTIKGDLVPRAIDELPVIALLCTQASNSCIIKNAEELKVKETNRIDTTADMLNLLGFNLQPTHDGLIIHPSEFRSNATVDSQTDHRIGMMLAVASLLSSEPLKIEQFDAVNVSFPGFLPKLKLLENEGK.

Residues Lys-23, Ser-24, and Arg-28 each contribute to the 3-phosphoshikimate site. Residue Lys-23 participates in phosphoenolpyruvate binding. Phosphoenolpyruvate is bound by residues Gly-95 and Arg-123. Residues Ser-167, Gln-169, Asp-317, and Lys-344 each coordinate 3-phosphoshikimate. Position 169 (Gln-169) interacts with phosphoenolpyruvate. Residue Asp-317 is the Proton acceptor of the active site. Phosphoenolpyruvate is bound by residues Arg-348 and Arg-390.

It belongs to the EPSP synthase family. Monomer.

The protein resides in the cytoplasm. The catalysed reaction is 3-phosphoshikimate + phosphoenolpyruvate = 5-O-(1-carboxyvinyl)-3-phosphoshikimate + phosphate. The protein operates within metabolic intermediate biosynthesis; chorismate biosynthesis; chorismate from D-erythrose 4-phosphate and phosphoenolpyruvate: step 6/7. Functionally, catalyzes the transfer of the enolpyruvyl moiety of phosphoenolpyruvate (PEP) to the 5-hydroxyl of shikimate-3-phosphate (S3P) to produce enolpyruvyl shikimate-3-phosphate and inorganic phosphate. This chain is 3-phosphoshikimate 1-carboxyvinyltransferase, found in Staphylococcus epidermidis (strain ATCC 12228 / FDA PCI 1200).